The following is a 214-amino-acid chain: Probable nicotinate-nucleotide adenylyltransferase (214 aa).

This sequence belongs to the NadD family.

It carries out the reaction nicotinate beta-D-ribonucleotide + ATP + H(+) = deamido-NAD(+) + diphosphate. The protein operates within cofactor biosynthesis; NAD(+) biosynthesis; deamido-NAD(+) from nicotinate D-ribonucleotide: step 1/1. Catalyzes the reversible adenylation of nicotinate mononucleotide (NaMN) to nicotinic acid adenine dinucleotide (NaAD). This is Probable nicotinate-nucleotide adenylyltransferase from Pseudomonas fluorescens (strain ATCC BAA-477 / NRRL B-23932 / Pf-5).